A 430-amino-acid chain; its full sequence is Alpha-1,6-mannosyl-glycoprotein 2-beta-N-acetylglucosaminyltransferase (430 aa).

The Cytoplasmic segment spans residues 1–12 (MANLWKKQRLRD). The helical; Signal-anchor for type II membrane protein transmembrane segment at 13–35 (TGLCRLGILFAVTLSIVLMLVSV) threads the bilayer. Over 36–430 (PRTALNGSSI…YRYSSSSASP (395 aa)) the chain is Lumenal. Residues N41 and N61 are each glycosylated (N-linked (GlcNAc...) asparagine). Substrate contacts are provided by residues 104–108 (YVHNR) and D135. Residues C177 and C188 are joined by a disulfide bond. 205-209 (SLKHH) serves as a coordination point for substrate. D237 is a binding site for Mn(2+). A disulfide bond links C259 and C262. Residue N295 is glycosylated (N-linked (GlcNAc...) asparagine). A disulfide bond links C310 and C414. Position 345 (H345) interacts with Mn(2+).

The protein belongs to the glycosyltransferase 16 (GT16) protein family. Mn(2+) serves as cofactor.

It is found in the golgi apparatus membrane. It catalyses the reaction an N(4)-{beta-D-GlcNAc-(1-&gt;2)-alpha-D-Man-(1-&gt;3)-[alpha-D-Man-(1-&gt;6)]-beta-D-Man-(1-&gt;4)-beta-D-GlcNAc-(1-&gt;4)-beta-D-GlcNAc}-L-asparaginyl-[protein] + UDP-N-acetyl-alpha-D-glucosamine = N(4)-{beta-D-GlcNAc-(1-&gt;2)-alpha-D-Man-(1-&gt;3)-[beta-D-GlcNAc-(1-&gt;2)-alpha-D-Man-(1-&gt;6)]-beta-D-Man-(1-&gt;4)-beta-D-GlcNAc-(1-&gt;4)-beta-D-GlcNAc}-L-asparaginyl-[protein] + UDP + H(+). It participates in protein modification; protein glycosylation. In terms of biological role, catalyzes an essential step in the conversion of oligo-mannose and hybrid to complex N-glycans. This Arabidopsis thaliana (Mouse-ear cress) protein is Alpha-1,6-mannosyl-glycoprotein 2-beta-N-acetylglucosaminyltransferase.